The sequence spans 179 residues: Replication restart protein DnaT (179 aa).

The tract at residues Ser-151–Gly-179 is disordered. Residues Pro-159–Ile-173 show a composition bias toward basic and acidic residues.

This sequence belongs to the DnaT family. In terms of assembly, homooligomerizes. Interacts with PriB. Component of the replication restart primosome. Primosome assembly occurs via a 'hand-off' mechanism. PriA binds to replication forks, subsequently PriB then DnaT bind; DnaT then displaces ssDNA to generate the helicase loading substrate.

Its function is as follows. Involved in the restart of stalled replication forks, which reloads the replicative helicase on sites other than the origin of replication. Can function in multiple replication restart pathways. Displaces ssDNA from a PriB-ssDNA complex. Probably forms a spiral filament on ssDNA. This chain is Replication restart protein DnaT, found in Klebsiella pneumoniae (strain 342).